A 793-amino-acid chain; its full sequence is Probable alpha-fucosidase A (793 aa).

The first 20 residues, 1–20, serve as a signal peptide directing secretion; it reads MLISGSSAALCALALPFAAA. Residues Asn-30, Asn-83, Asn-100, Asn-104, Asn-123, Asn-179, Asn-199, Asn-234, Asn-323, Asn-597, Asn-622, Asn-660, and Asn-757 are each glycosylated (N-linked (GlcNAc...) asparagine).

It belongs to the glycosyl hydrolase 95 family.

It is found in the secreted. It carries out the reaction an alpha-L-fucoside + H2O = L-fucose + an alcohol. In terms of biological role, alpha-fucosidase involved in degradation of fucosylated xyloglucans. Hydrolyzes alpha-1,2-linked fucose. The polypeptide is Probable alpha-fucosidase A (afcA) (Aspergillus niger (strain ATCC MYA-4892 / CBS 513.88 / FGSC A1513)).